The following is a 283-amino-acid chain: 4-diphosphocytidyl-2-C-methyl-D-erythritol kinase (283 aa).

The active site involves K10. 99–109 (PMGGGLGGGSS) provides a ligand contact to ATP. The active site involves D141.

Belongs to the GHMP kinase family. IspE subfamily. As to quaternary structure, homodimer.

The catalysed reaction is 4-CDP-2-C-methyl-D-erythritol + ATP = 4-CDP-2-C-methyl-D-erythritol 2-phosphate + ADP + H(+). It participates in isoprenoid biosynthesis; isopentenyl diphosphate biosynthesis via DXP pathway; isopentenyl diphosphate from 1-deoxy-D-xylulose 5-phosphate: step 3/6. Its function is as follows. Catalyzes the phosphorylation of the position 2 hydroxy group of 4-diphosphocytidyl-2C-methyl-D-erythritol. The sequence is that of 4-diphosphocytidyl-2-C-methyl-D-erythritol kinase from Salmonella arizonae (strain ATCC BAA-731 / CDC346-86 / RSK2980).